A 779-amino-acid chain; its full sequence is Probable phosphoketolase 2 (779 aa).

This sequence belongs to the XFP family. It depends on thiamine diphosphate as a cofactor.

The chain is Probable phosphoketolase 2 from Rhizobium meliloti (strain 1021) (Ensifer meliloti).